A 148-amino-acid polypeptide reads, in one-letter code: Nucleoside diphosphate kinase (148 aa).

ATP contacts are provided by Lys10, Phe58, Arg86, Thr92, Arg103, and Asn113. Catalysis depends on His116, which acts as the Pros-phosphohistidine intermediate.

This sequence belongs to the NDK family. Requires Mg(2+) as cofactor.

The protein localises to the cytoplasm. It catalyses the reaction a 2'-deoxyribonucleoside 5'-diphosphate + ATP = a 2'-deoxyribonucleoside 5'-triphosphate + ADP. It carries out the reaction a ribonucleoside 5'-diphosphate + ATP = a ribonucleoside 5'-triphosphate + ADP. Major role in the synthesis of nucleoside triphosphates other than ATP. The ATP gamma phosphate is transferred to the NDP beta phosphate via a ping-pong mechanism, using a phosphorylated active-site intermediate. This Thermoplasma acidophilum (strain ATCC 25905 / DSM 1728 / JCM 9062 / NBRC 15155 / AMRC-C165) protein is Nucleoside diphosphate kinase.